Reading from the N-terminus, the 424-residue chain is 3-phosphoshikimate 1-carboxyvinyltransferase (424 aa).

Positions 21, 22, and 26 each coordinate 3-phosphoshikimate. K21 provides a ligand contact to phosphoenolpyruvate. Positions 91 and 119 each coordinate phosphoenolpyruvate. 3-phosphoshikimate contacts are provided by S164, Q166, D310, and K337. Phosphoenolpyruvate is bound at residue Q166. D310 serves as the catalytic Proton acceptor. Residues R341 and R382 each contribute to the phosphoenolpyruvate site.

It belongs to the EPSP synthase family. As to quaternary structure, monomer.

It localises to the cytoplasm. The catalysed reaction is 3-phosphoshikimate + phosphoenolpyruvate = 5-O-(1-carboxyvinyl)-3-phosphoshikimate + phosphate. The protein operates within metabolic intermediate biosynthesis; chorismate biosynthesis; chorismate from D-erythrose 4-phosphate and phosphoenolpyruvate: step 6/7. Catalyzes the transfer of the enolpyruvyl moiety of phosphoenolpyruvate (PEP) to the 5-hydroxyl of shikimate-3-phosphate (S3P) to produce enolpyruvyl shikimate-3-phosphate and inorganic phosphate. This is 3-phosphoshikimate 1-carboxyvinyltransferase from Campylobacter curvus (strain 525.92).